A 493-amino-acid chain; its full sequence is Glutamyl-tRNA(Gln) amidotransferase subunit A (493 aa).

Residues lysine 79 and serine 159 each act as charge relay system in the active site. The Acyl-ester intermediate role is filled by serine 183.

This sequence belongs to the amidase family. GatA subfamily. As to quaternary structure, heterotrimer of A, B and C subunits.

The enzyme catalyses L-glutamyl-tRNA(Gln) + L-glutamine + ATP + H2O = L-glutaminyl-tRNA(Gln) + L-glutamate + ADP + phosphate + H(+). Its function is as follows. Allows the formation of correctly charged Gln-tRNA(Gln) through the transamidation of misacylated Glu-tRNA(Gln) in organisms which lack glutaminyl-tRNA synthetase. The reaction takes place in the presence of glutamine and ATP through an activated gamma-phospho-Glu-tRNA(Gln). This chain is Glutamyl-tRNA(Gln) amidotransferase subunit A, found in Rhizobium johnstonii (strain DSM 114642 / LMG 32736 / 3841) (Rhizobium leguminosarum bv. viciae).